Consider the following 250-residue polypeptide: Thiamine thiazole synthase (250 aa).

NAD(+)-binding positions include Ser36, 55-56 (EE), Gly63, Val126, and 152-154 (HVD). The Fe cation site is built by Asp154 and His169. Met216 contacts NAD(+). A glycine-binding site is contributed by Arg226.

The protein belongs to the THI4 family. In terms of assembly, homooctamer; tetramer of dimers. Fe(2+) serves as cofactor.

The enzyme catalyses hydrogen sulfide + glycine + NAD(+) = ADP-5-ethyl-4-methylthiazole-2-carboxylate + nicotinamide + 3 H2O + H(+). It functions in the pathway cofactor biosynthesis; thiamine diphosphate biosynthesis. Involved in the biosynthesis of the thiazole moiety of thiamine. Catalyzes the conversion of NAD and glycine to adenosine diphosphate 5-(2-hydroxyethyl)-4-methylthiazole-2-carboxylate (ADT), an adenylated thiazole intermediate, using free sulfide as a source of sulfur. The chain is Thiamine thiazole synthase from Thermotoga maritima (strain ATCC 43589 / DSM 3109 / JCM 10099 / NBRC 100826 / MSB8).